Consider the following 198-residue polypeptide: NAD(P)H quinone oxidoreductase PST1 (198 aa).

Residues 6–192 (VAIIIYSLYH…AIAKQQGEDF (187 aa)) form the Flavodoxin-like domain. FMN-binding positions include 12–16 (SLYHH) and 112–164 (VFVW…SPWG).

It belongs to the WrbA family. It depends on FMN as a cofactor.

It is found in the cell membrane. The enzyme catalyses a quinone + NADH + H(+) = a quinol + NAD(+). The catalysed reaction is a quinone + NADPH + H(+) = a quinol + NADP(+). Flavodoxin-like protein (FLP) that plays a role in cell wall integrity, oxidative stress protection and virulence. FLPs act as NAD(P)H quinone oxidoreductases. Reduces ubiquinone (coenzyme Q), enabling it to serve as an antioxidant in the membrane. This is NAD(P)H quinone oxidoreductase PST1 from Candida albicans (strain SC5314 / ATCC MYA-2876) (Yeast).